We begin with the raw amino-acid sequence, 264 residues long: Acyl-[acyl-carrier-protein]--UDP-N-acetylglucosamine O-acyltransferase (264 aa).

This sequence belongs to the transferase hexapeptide repeat family. LpxA subfamily. As to quaternary structure, homotrimer.

It localises to the cytoplasm. It carries out the reaction a (3R)-hydroxyacyl-[ACP] + UDP-N-acetyl-alpha-D-glucosamine = a UDP-3-O-[(3R)-3-hydroxyacyl]-N-acetyl-alpha-D-glucosamine + holo-[ACP]. It participates in glycolipid biosynthesis; lipid IV(A) biosynthesis; lipid IV(A) from (3R)-3-hydroxytetradecanoyl-[acyl-carrier-protein] and UDP-N-acetyl-alpha-D-glucosamine: step 1/6. In terms of biological role, involved in the biosynthesis of lipid A, a phosphorylated glycolipid that anchors the lipopolysaccharide to the outer membrane of the cell. The protein is Acyl-[acyl-carrier-protein]--UDP-N-acetylglucosamine O-acyltransferase of Rickettsia canadensis (strain McKiel).